Here is a 186-residue protein sequence, read N- to C-terminus: Bifunctional protein PyrR (186 aa).

The short motif at 101 to 113 (VVLVDDVLYTGRT) is the PRPP-binding element.

The protein belongs to the purine/pyrimidine phosphoribosyltransferase family. PyrR subfamily.

It carries out the reaction UMP + diphosphate = 5-phospho-alpha-D-ribose 1-diphosphate + uracil. In terms of biological role, regulates the transcription of the pyrimidine nucleotide (pyr) operon in response to exogenous pyrimidines. Its function is as follows. Also displays a weak uracil phosphoribosyltransferase activity which is not physiologically significant. The sequence is that of Bifunctional protein PyrR from Syntrophobacter fumaroxidans (strain DSM 10017 / MPOB).